The following is a 450-amino-acid chain: Phosphoglucosamine mutase (450 aa).

Serine 101 acts as the Phosphoserine intermediate in catalysis. Mg(2+) is bound by residues serine 101, aspartate 240, aspartate 242, and aspartate 244. Serine 101 bears the Phosphoserine mark.

This sequence belongs to the phosphohexose mutase family. Requires Mg(2+) as cofactor. Post-translationally, activated by phosphorylation.

The catalysed reaction is alpha-D-glucosamine 1-phosphate = D-glucosamine 6-phosphate. Catalyzes the conversion of glucosamine-6-phosphate to glucosamine-1-phosphate. This Streptococcus uberis (strain ATCC BAA-854 / 0140J) protein is Phosphoglucosamine mutase.